A 291-amino-acid polypeptide reads, in one-letter code: Formamidopyrimidine-DNA glycosylase (291 aa).

P2 (schiff-base intermediate with DNA) is an active-site residue. The active-site Proton donor is the E3. The active-site Proton donor; for beta-elimination activity is K58. 3 residues coordinate DNA: H104, R123, and K166. Residues 257–291 (KVYDREGKPCPTCGGTVQRFVQNGRSTFWCPKCQK) form an FPG-type zinc finger. The active-site Proton donor; for delta-elimination activity is R281.

It belongs to the FPG family. In terms of assembly, monomer. Zn(2+) is required as a cofactor.

It catalyses the reaction Hydrolysis of DNA containing ring-opened 7-methylguanine residues, releasing 2,6-diamino-4-hydroxy-5-(N-methyl)formamidopyrimidine.. It carries out the reaction 2'-deoxyribonucleotide-(2'-deoxyribose 5'-phosphate)-2'-deoxyribonucleotide-DNA = a 3'-end 2'-deoxyribonucleotide-(2,3-dehydro-2,3-deoxyribose 5'-phosphate)-DNA + a 5'-end 5'-phospho-2'-deoxyribonucleoside-DNA + H(+). Its function is as follows. Involved in base excision repair of DNA damaged by oxidation or by mutagenic agents. Acts as a DNA glycosylase that recognizes and removes damaged bases. Has a preference for oxidized purines, such as 7,8-dihydro-8-oxoguanine (8-oxoG). Has AP (apurinic/apyrimidinic) lyase activity and introduces nicks in the DNA strand. Cleaves the DNA backbone by beta-delta elimination to generate a single-strand break at the site of the removed base with both 3'- and 5'-phosphates. The sequence is that of Formamidopyrimidine-DNA glycosylase from Rhodopseudomonas palustris (strain TIE-1).